The chain runs to 894 residues: Glutamate receptor 3 (894 aa).

The N-terminal stretch at 1–28 is a signal peptide; that stretch reads MARQKKMGQNVLRAVFFLVLGLLGHSHG. Topologically, residues 29–552 are extracellular; sequence GFPNTISIGG…GVFSFLDPLA (524 aa). 5 N-linked (GlcNAc...) asparagine glycosylation sites follow: N63, N266, N380, N415, and N422. C91 and C340 are disulfide-bonded. L-glutamate-binding residues include P508, T510, and R515. A helical transmembrane segment spans residues 553-573; the sequence is YEIWMCIVFASIGVSVVLFLV. The Cytoplasmic portion of the chain corresponds to 574-602; the sequence is SRFSPYEWHLEDNNEEPRDPQSPPDPPNE. Positions 603–618 form an intramembrane region, helical; Pore-forming; that stretch reads FGIFNSLWFSLGAFMQ. An intramembrane segment occupies 619 to 621; the sequence is QGC. C621 carries the S-palmitoyl cysteine lipid modification. Residues 622-627 are Cytoplasmic-facing; that stretch reads DISPRS. A helical transmembrane segment spans residues 628-648; the sequence is LSGRIVGGVWWFFTLIIISSY. The Extracellular portion of the chain corresponds to 649–823; that stretch reads TANLAAFLTV…DKTSALSLSN (175 aa). Positions 686, 687, and 737 each coordinate L-glutamate. A disulfide bridge links C750 with C805. The chain crosses the membrane as a helical span at residues 824-844; the sequence is VAGVFYILVGGLGLAMMVALI. Residues 845–894 are Cytoplasmic-facing; that stretch reads EFCYKSRAESKRMKLTKNTQNFKPAPATNTQNYATYREGYNVYGTESVKI. A lipid anchor (S-palmitoyl cysteine) is attached at C847. Phosphotyrosine occurs at positions 877 and 887.

The protein belongs to the glutamate-gated ion channel (TC 1.A.10.1) family. GRIA3 subfamily. In terms of assembly, homotetramer or heterotetramer of pore-forming glutamate receptor subunits. Tetramers may be formed by the dimerization of dimers. Interacts with PICK1, GRIP1 and GRIP2. Found in a complex with GRIA1, GRIA2, GRIA4, CNIH2, CNIH3, CACNG2, CACNG3, CACNG4, CACNG5, CACNG7 and CACNG8. Interacts with CACNG5. Found in a complex with GRIA1, GRIA2, GRIA4, DLG4, CACNG8 and CNIH2.

It is found in the cell membrane. The protein localises to the postsynaptic cell membrane. Its subcellular location is the postsynaptic density membrane. The catalysed reaction is Ca(2+)(in) = Ca(2+)(out). Functionally, ionotropic glutamate receptor that functions as a ligand-gated cation channel, gated by L-glutamate and glutamatergic agonists such as alpha-amino-3-hydroxy-5-methyl-4-isoxazolepropionic acid (AMPA), quisqualic acid, and kainic acid. L-glutamate acts as an excitatory neurotransmitter at many synapses in the central nervous system and plays an important role in fast excitatory synaptic transmission by inducing long-term potentiation. Binding of the excitatory neurotransmitter L-glutamate induces a conformation change, leading to the opening of the cation channel, and thereby converts the chemical signal to an electrical impulse upon entry of calcium. The receptor then desensitizes rapidly and enters a transient inactive state, characterized by the presence of bound agonist. In the presence of CACNG8, shows resensitization which is characterized by a delayed accumulation of current flux upon continued application of glutamate. The chain is Glutamate receptor 3 from Macaca fascicularis (Crab-eating macaque).